We begin with the raw amino-acid sequence, 256 residues long: MASAKRVSDEPAYVLHSYDWSESSLILEVFTRHRGRVALAAKGVKRPTSNFRPVLLPLQPLSLSYSLGGEGNAEIHTLKGAEWVGGHVMPQGDALMSGLYLNELLMRLLARDDPYAALFDIYAGVVRVLAGQHGDAIEPVLRTFELLLLRELGHLPALNEESATLAPLAEGRRYALVAEGGLRPALQGERAVLGAAQWQAIESALQARQAFNATLHVVAQPEQALALKPQLRALLQYHCGSPMLRTRQLMMDLQSL.

Belongs to the RecO family.

Involved in DNA repair and RecF pathway recombination. This is DNA repair protein RecO from Delftia acidovorans (strain DSM 14801 / SPH-1).